Reading from the N-terminus, the 514-residue chain is 2,3-bisphosphoglycerate-independent phosphoglycerate mutase (514 aa).

Mn(2+) contacts are provided by Asp14 and Ser64. Ser64 (phosphoserine intermediate) is an active-site residue. Substrate-binding positions include His125, 155–156 (RD), Arg187, Arg193, 263–266 (RADR), and Lys336. Positions 403, 407, 444, 445, and 463 each coordinate Mn(2+).

The protein belongs to the BPG-independent phosphoglycerate mutase family. Monomer. The cofactor is Mn(2+).

It catalyses the reaction (2R)-2-phosphoglycerate = (2R)-3-phosphoglycerate. It functions in the pathway carbohydrate degradation; glycolysis; pyruvate from D-glyceraldehyde 3-phosphate: step 3/5. Its function is as follows. Catalyzes the interconversion of 2-phosphoglycerate and 3-phosphoglycerate. This chain is 2,3-bisphosphoglycerate-independent phosphoglycerate mutase, found in Shewanella baltica (strain OS195).